The following is a 123-amino-acid chain: Large ribosomal subunit protein eL8 (123 aa).

It belongs to the eukaryotic ribosomal protein eL8 family. In terms of assembly, part of the 50S ribosomal subunit. Probably part of the RNase P complex.

Its subcellular location is the cytoplasm. Its function is as follows. Multifunctional RNA-binding protein that recognizes the K-turn motif in ribosomal RNA, the RNA component of RNase P, box H/ACA, box C/D and box C'/D' sRNAs. This is Large ribosomal subunit protein eL8 from Methanothermobacter thermautotrophicus (strain ATCC 29096 / DSM 1053 / JCM 10044 / NBRC 100330 / Delta H) (Methanobacterium thermoautotrophicum).